The sequence spans 185 residues: Elongation factor P (185 aa).

It belongs to the elongation factor P family.

The protein resides in the cytoplasm. It functions in the pathway protein biosynthesis; polypeptide chain elongation. Involved in peptide bond synthesis. Stimulates efficient translation and peptide-bond synthesis on native or reconstituted 70S ribosomes in vitro. Probably functions indirectly by altering the affinity of the ribosome for aminoacyl-tRNA, thus increasing their reactivity as acceptors for peptidyl transferase. This is Elongation factor P from Lachnoclostridium phytofermentans (strain ATCC 700394 / DSM 18823 / ISDg) (Clostridium phytofermentans).